The chain runs to 170 residues: Small ribosomal subunit protein bS16 (170 aa).

The tract at residues 109–170 (ALAEAEGGPS…AAESEAPAAE (62 aa)) is disordered. The span at 131–150 (AKKDEQPTEKAAEPAAEKAA) shows a compositional bias: basic and acidic residues. Residues 151–170 (EPAAEAPAEAAAESEAPAAE) show a composition bias toward low complexity.

The protein belongs to the bacterial ribosomal protein bS16 family.

In Mycolicibacterium gilvum (strain PYR-GCK) (Mycobacterium gilvum (strain PYR-GCK)), this protein is Small ribosomal subunit protein bS16.